The primary structure comprises 295 residues: Tyrosine recombinase XerC (295 aa).

Residues M1–V85 enclose the Core-binding (CB) domain. Residues Y106–D285 form the Tyr recombinase domain. Active-site residues include R145, K169, H237, R240, and H263. Catalysis depends on Y272, which acts as the O-(3'-phospho-DNA)-tyrosine intermediate.

It belongs to the 'phage' integrase family. XerC subfamily. Forms a cyclic heterotetrameric complex composed of two molecules of XerC and two molecules of XerD.

The protein localises to the cytoplasm. Functionally, site-specific tyrosine recombinase, which acts by catalyzing the cutting and rejoining of the recombining DNA molecules. The XerC-XerD complex is essential to convert dimers of the bacterial chromosome into monomers to permit their segregation at cell division. It also contributes to the segregational stability of plasmids. The polypeptide is Tyrosine recombinase XerC (Actinobacillus succinogenes (strain ATCC 55618 / DSM 22257 / CCUG 43843 / 130Z)).